Reading from the N-terminus, the 276-residue chain is Octanoyltransferase LipM (276 aa).

The BPL/LPL catalytic domain occupies 31–246; sequence GLIPPVIRFY…GFAKSLQIEL (216 aa). The active-site Acyl-thioester intermediate is the cysteine 148.

Belongs to the octanoyltransferase LipM family. Monomer.

It carries out the reaction octanoyl-[ACP] + L-lysyl-[protein] = N(6)-octanoyl-L-lysyl-[protein] + holo-[ACP] + H(+). The protein operates within protein modification; protein lipoylation via endogenous pathway; protein N(6)-(lipoyl)lysine from octanoyl-[acyl-carrier-protein]. Its function is as follows. Catalyzes the transfer of endogenously produced octanoic acid from octanoyl-acyl-carrier-protein onto the lipoyl domain of GcvH, an intermediate carrier during protein lipoylation. This is Octanoyltransferase LipM from Lysinibacillus sphaericus (strain C3-41).